Here is a 382-residue protein sequence, read N- to C-terminus: MSLNIFWFLPTHGDGKYLGTSEGARAVDHGYLQQIAQAADRLGFGGVLIPTGRSCEDSWLVAASLIPVTQHLKFLVALRPGIISPTVAARQAATLDRLSNGRALFNLVTGGDPDELAGDGLHLNHQERYEASVEFTRIWRKVLEGENVDYQGKHIQVKGAKLLYPPIQQPRPPLYFGGSSEAAQDLAAEQVELYLTWGEPPAAVAEKIAQVREKAAAQGREVRFGIRLHVIVRETNDEAWAAADRLISHLDDDTIARAQASLARFDSVGQQRMAALHGGNRDNLEVSPNLWAGVGLVRGGAGTALVGDGPTVAARVKEYADLGIDTFIFSGYPHLEESYRVAELLFPHLDVQRPEQPQTGGYVSPFGEMVANDILPKSVSQS.

This sequence belongs to the SsuD family.

The enzyme catalyses an alkanesulfonate + FMNH2 + O2 = an aldehyde + FMN + sulfite + H2O + 2 H(+). In terms of biological role, catalyzes the desulfonation of aliphatic sulfonates. This Pseudomonas putida (strain W619) protein is Alkanesulfonate monooxygenase.